The primary structure comprises 324 residues: UPF0158 protein CPn_0518/CP_0235/CPj0518/CpB0539 (324 aa).

It belongs to the UPF0158 family.

In Chlamydia pneumoniae (Chlamydophila pneumoniae), this protein is UPF0158 protein CPn_0518/CP_0235/CPj0518/CpB0539.